A 444-amino-acid polypeptide reads, in one-letter code: Trigger factor (444 aa).

Residues 160 to 245 form the PPIase FKBP-type domain; the sequence is DMQVTFDFEG…VKQVEKPKLP (86 aa).

It belongs to the FKBP-type PPIase family. Tig subfamily.

The protein resides in the cytoplasm. The catalysed reaction is [protein]-peptidylproline (omega=180) = [protein]-peptidylproline (omega=0). Its function is as follows. Involved in protein export. Acts as a chaperone by maintaining the newly synthesized protein in an open conformation. Functions as a peptidyl-prolyl cis-trans isomerase. The polypeptide is Trigger factor (Acinetobacter baylyi (strain ATCC 33305 / BD413 / ADP1)).